Here is a 616-residue protein sequence, read N- to C-terminus: MALLQIAEPGLMAAPHQHKLAVGIDLGTTNSLVATVRSAHTEILLDEKDRPLVPSIVHFGDNNEITVGYEAGELASIDPQNTVISVKRLIGRSLEDVQARYPNLPYRFEASENGLPLISTRKSAVSPVEVSSEILKKLTALAKRRLGGELQGAVITVPAYFDDAQRQSTKDAAKLAGLNVLRLLNEPTAAAIAYGLDSGKEGVIAVYDLGGGTFDISILRLSKGVFEVLATGGDTALGGDDFDHLVADWITEQSGISPQDDKQKRQLVELATRLKIQLTDNETVAIQYQNWHGKISRNQFNQLIQPLVKRSLISCRRALKDANVTADEVNEVVMVGGSTRVPFVREQVGEFFKRQPLTSIDPDKVVALGAAVQADILVGNKPDSEMLLLDVIPLSLGIETMGGLVEKIIPRNTTIPVARAQEFTTFKDGQTAMTVHIVQGEREMVADCRSLARFTLRGIPPMAAGAAQVRVTYQVDADGLLNVTAMEKSTGVQSSIQVKPSYGLTDDEITQMLKASMDNAKQDIDARLLAEQRVEAKRVIESVLSALSHDRDLLNDEELSAIKKALVELDKLQQQNDTLAIKQGIKDLDAATQEFAARRMDKSIRSALTGHSVEDI.

Belongs to the heat shock protein 70 family.

Functionally, chaperone involved in the maturation of iron-sulfur cluster-containing proteins. Has a low intrinsic ATPase activity which is markedly stimulated by HscB. This Mannheimia succiniciproducens (strain KCTC 0769BP / MBEL55E) protein is Chaperone protein HscA homolog.